The primary structure comprises 453 residues: UDP-glycosyltransferase 74E1 (453 aa).

UDP-alpha-D-glucose is bound by residues S279, 332–334, 349–357, and 371–374; these read SPQ, HCGWNSTLE, and WADQ.

The protein belongs to the UDP-glycosyltransferase family.

The sequence is that of UDP-glycosyltransferase 74E1 (UGT74E1) from Arabidopsis thaliana (Mouse-ear cress).